A 547-amino-acid polypeptide reads, in one-letter code: Large cysteine-rich periplasmic protein OmcB, serovar E (547 aa).

Positions 1–22 (MNKLIRRAVTIFAVTSVASLFA) are cleaved as a signal peptide. Positions 23 to 40 (SGVLETSMAESLSTNVIS) are excised as a propeptide. The disordered stretch occupies residues 46 to 83 (AKDNTSHKSKKARKNHSKETLVDRKEVAPVHESKATGP). Over residues 52–61 (HKSKKARKNH) the composition is skewed to basic residues. Basic and acidic residues predominate over residues 62-79 (SKETLVDRKEVAPVHESK).

As to quaternary structure, part of a disulfide cross-linked outer membrane complex (COMC) composed of the major outer membrane porin (MOMP), the small cysteine-rich protein (OmcA) and the large cysteine-rich periplasmic protein (OmcB).

It localises to the periplasm. In elementary bodies (EBs, the infectious stage, which is able to survive outside the host cell) provides the structural integrity of the outer envelope through disulfide cross-links with the small cysteine-rich protein and the major outer membrane protein. It has been described in publications as the Sarkosyl-insoluble COMC (Chlamydia outer membrane complex), and serves as the functional equivalent of peptidoglycan. The sequence is that of Large cysteine-rich periplasmic protein OmcB, serovar E (omcB) from Chlamydia trachomatis.